We begin with the raw amino-acid sequence, 810 residues long: Eukaryotic translation initiation factor 3 subunit C (810 aa).

A compositionally biased stretch (polar residues) spans 1–11; it reads MSRFFATNYNY. Residues 1–98 are disordered; it reads MSRFFATNYN…DSDESDEEDG (98 aa). A compositionally biased stretch (low complexity) spans 12 to 33; sequence DETSSSSEEDLLSSSEELLSSS. The segment covering 34-58 has biased composition (acidic residues); it reads EEGELSDDSLFNDESESESDFDSDD. The region spanning 605–780 is the PCI domain; the sequence is YHQHINLDLV…TYIVIEKGDE (176 aa).

This sequence belongs to the eIF-3 subunit C family. Component of the eukaryotic translation initiation factor 3 (eIF-3) complex.

It is found in the cytoplasm. Component of the eukaryotic translation initiation factor 3 (eIF-3) complex, which is involved in protein synthesis of a specialized repertoire of mRNAs and, together with other initiation factors, stimulates binding of mRNA and methionyl-tRNAi to the 40S ribosome. The eIF-3 complex specifically targets and initiates translation of a subset of mRNAs involved in cell proliferation. This chain is Eukaryotic translation initiation factor 3 subunit C, found in Candida glabrata (strain ATCC 2001 / BCRC 20586 / JCM 3761 / NBRC 0622 / NRRL Y-65 / CBS 138) (Yeast).